A 400-amino-acid polypeptide reads, in one-letter code: Involucrin (400 aa).

Disordered stretches follow at residues 1-196 (MSQQ…HLKQ), 273-312 (KEEV…EQQL), and 333-381 (KRDE…KGEV). Low complexity-rich tracts occupy residues 78–159 (QQQQ…QQHQ), 169–186 (EQQQ…GQQE), and 279–292 (EQQQ…QQHQ). A compositionally biased stretch (basic and acidic residues) spans 333–344 (KRDEQLGKKEEQ). Positions 346–358 (LEPSEQQEGLLEQ) are enriched in low complexity.

This sequence belongs to the involucrin family. As to quaternary structure, directly or indirectly cross-linked to cornifelin (CNFN). Post-translationally, substrate of transglutaminase. Specific glutamines or lysines are cross-linked to keratins, desmoplakin and to inter involucrin molecules. In terms of tissue distribution, keratinocytes of epidermis and other stratified squamous epithelia.

The protein localises to the cytoplasm. Its function is as follows. Part of the insoluble cornified cell envelope (CE) of stratified squamous epithelia. This is Involucrin (IVL) from Tupaia glis (Common tree shrew).